Reading from the N-terminus, the 802-residue chain is Elongation factor G, mitochondrial (802 aa).

The transit peptide at 1 to 24 (MRCPSLARLPNRALSGLTRSPVRL) directs the protein to the mitochondrion. The tr-type G domain maps to 100-387 (SRLRNIGIAA…GVIDYLPNPS (288 aa)). GTP contacts are provided by residues 109–116 (AHIDSGKT), 185–189 (DTPGH), and 239–242 (NKMD).

The protein belongs to the TRAFAC class translation factor GTPase superfamily. Classic translation factor GTPase family. EF-G/EF-2 subfamily.

It is found in the mitochondrion. It functions in the pathway protein biosynthesis; polypeptide chain elongation. Its function is as follows. Mitochondrial GTPase that catalyzes the GTP-dependent ribosomal translocation step during translation elongation. During this step, the ribosome changes from the pre-translocational (PRE) to the post-translocational (POST) state as the newly formed A-site-bound peptidyl-tRNA and P-site-bound deacylated tRNA move to the P and E sites, respectively. Catalyzes the coordinated movement of the two tRNA molecules, the mRNA and conformational changes in the ribosome. The polypeptide is Elongation factor G, mitochondrial (mef1) (Aspergillus fumigatus (strain CBS 144.89 / FGSC A1163 / CEA10) (Neosartorya fumigata)).